Here is a 128-residue protein sequence, read N- to C-terminus: Large ribosomal subunit protein bL12 (128 aa).

Belongs to the bacterial ribosomal protein bL12 family. Homodimer. Part of the ribosomal stalk of the 50S ribosomal subunit. Forms a multimeric L10(L12)X complex, where L10 forms an elongated spine to which 2 to 4 L12 dimers bind in a sequential fashion. Binds GTP-bound translation factors.

Functionally, forms part of the ribosomal stalk which helps the ribosome interact with GTP-bound translation factors. Is thus essential for accurate translation. This chain is Large ribosomal subunit protein bL12, found in Sorangium cellulosum (strain So ce56) (Polyangium cellulosum (strain So ce56)).